A 610-amino-acid polypeptide reads, in one-letter code: Dihydroxy-acid dehydratase (610 aa).

Position 81 (Asp81) interacts with Mg(2+). Cys122 lines the [2Fe-2S] cluster pocket. Asp123 and Lys124 together coordinate Mg(2+). Position 124 is an N6-carboxylysine (Lys124). A [2Fe-2S] cluster-binding site is contributed by Cys193. Position 489 (Glu489) interacts with Mg(2+). The active-site Proton acceptor is the Ser515.

This sequence belongs to the IlvD/Edd family. Homodimer. [2Fe-2S] cluster serves as cofactor. Mg(2+) is required as a cofactor.

It carries out the reaction (2R)-2,3-dihydroxy-3-methylbutanoate = 3-methyl-2-oxobutanoate + H2O. The enzyme catalyses (2R,3R)-2,3-dihydroxy-3-methylpentanoate = (S)-3-methyl-2-oxopentanoate + H2O. Its pathway is amino-acid biosynthesis; L-isoleucine biosynthesis; L-isoleucine from 2-oxobutanoate: step 3/4. The protein operates within amino-acid biosynthesis; L-valine biosynthesis; L-valine from pyruvate: step 3/4. Functions in the biosynthesis of branched-chain amino acids. Catalyzes the dehydration of (2R,3R)-2,3-dihydroxy-3-methylpentanoate (2,3-dihydroxy-3-methylvalerate) into 2-oxo-3-methylpentanoate (2-oxo-3-methylvalerate) and of (2R)-2,3-dihydroxy-3-methylbutanoate (2,3-dihydroxyisovalerate) into 2-oxo-3-methylbutanoate (2-oxoisovalerate), the penultimate precursor to L-isoleucine and L-valine, respectively. This is Dihydroxy-acid dehydratase from Xylella fastidiosa (strain M12).